The chain runs to 1595 residues: Pentafunctional AROM polypeptide (1595 aa).

Residues 1-384 (MGVPTKISIL…HEPRASTVSN (384 aa)) form a 3-dehydroquinate synthase region. Residues 44 to 46 (DTN), 81 to 84 (ESSK), 114 to 116 (GGV), and D119 contribute to the NAD(+) site. R130 is a 7-phospho-2-dehydro-3-deoxy-D-arabino-heptonate binding site. 139–140 (TT) provides a ligand contact to NAD(+). The 7-phospho-2-dehydro-3-deoxy-D-arabino-heptonate site is built by D146 and K152. K161 is a binding site for NAD(+). N162 provides a ligand contact to 7-phospho-2-dehydro-3-deoxy-D-arabino-heptonate. Residues 179–182 (FLNT) and N190 contribute to the NAD(+) site. Residue E194 participates in Zn(2+) binding. 7-phospho-2-dehydro-3-deoxy-D-arabino-heptonate is bound by residues 194–197 (EVIK) and K250. Residue E260 is the Proton acceptor; for 3-dehydroquinate synthase activity of the active site. Residues 264–268 (RNLLN) and H271 each bind 7-phospho-2-dehydro-3-deoxy-D-arabino-heptonate. H271 is a binding site for Zn(2+). H275 acts as the Proton acceptor; for 3-dehydroquinate synthase activity in catalysis. 7-phospho-2-dehydro-3-deoxy-D-arabino-heptonate is bound by residues H287 and K356. H287 provides a ligand contact to Zn(2+). Positions 397 to 842 (VSPGVPKGLD…WDSLAQTFKV (446 aa)) are EPSP synthase. Residue C824 is the For EPSP synthase activity of the active site. The interval 866 to 1057 (ASIFIIGMRG…RRKENTFFVS (192 aa)) is shikimate kinase. 872–879 (GMRGAGKT) contributes to the ATP binding site. The segment at 1058–1278 (LTLPDLGLAA…AAPGQLSARE (221 aa)) is 3-dehydroquinase. Catalysis depends on H1181, which acts as the Proton acceptor; for 3-dehydroquinate dehydratase activity. K1209 acts as the Schiff-base intermediate with substrate; for 3-dehydroquinate dehydratase activity in catalysis. The tract at residues 1291–1595 (AKKFAVIGNP…MGVLPSEDIS (305 aa)) is shikimate dehydrogenase.

This sequence in the N-terminal section; belongs to the sugar phosphate cyclases superfamily. Dehydroquinate synthase family. It in the 2nd section; belongs to the EPSP synthase family. The protein in the 3rd section; belongs to the shikimate kinase family. In the 4th section; belongs to the type-I 3-dehydroquinase family. This sequence in the C-terminal section; belongs to the shikimate dehydrogenase family. In terms of assembly, homodimer. Requires Zn(2+) as cofactor.

It is found in the cytoplasm. The catalysed reaction is 7-phospho-2-dehydro-3-deoxy-D-arabino-heptonate = 3-dehydroquinate + phosphate. The enzyme catalyses 3-dehydroquinate = 3-dehydroshikimate + H2O. It carries out the reaction shikimate + NADP(+) = 3-dehydroshikimate + NADPH + H(+). It catalyses the reaction shikimate + ATP = 3-phosphoshikimate + ADP + H(+). The catalysed reaction is 3-phosphoshikimate + phosphoenolpyruvate = 5-O-(1-carboxyvinyl)-3-phosphoshikimate + phosphate. It participates in metabolic intermediate biosynthesis; chorismate biosynthesis; chorismate from D-erythrose 4-phosphate and phosphoenolpyruvate: step 2/7. It functions in the pathway metabolic intermediate biosynthesis; chorismate biosynthesis; chorismate from D-erythrose 4-phosphate and phosphoenolpyruvate: step 3/7. Its pathway is metabolic intermediate biosynthesis; chorismate biosynthesis; chorismate from D-erythrose 4-phosphate and phosphoenolpyruvate: step 4/7. The protein operates within metabolic intermediate biosynthesis; chorismate biosynthesis; chorismate from D-erythrose 4-phosphate and phosphoenolpyruvate: step 5/7. It participates in metabolic intermediate biosynthesis; chorismate biosynthesis; chorismate from D-erythrose 4-phosphate and phosphoenolpyruvate: step 6/7. The AROM polypeptide catalyzes 5 consecutive enzymatic reactions in prechorismate polyaromatic amino acid biosynthesis. The protein is Pentafunctional AROM polypeptide of Ajellomyces capsulatus (strain H143) (Darling's disease fungus).